Reading from the N-terminus, the 467-residue chain is Hydroxyacid-oxoacid transhydrogenase, mitochondrial (467 aa).

At Lys-445 the chain carries N6-acetyllysine. Position 452 is a phosphoserine (Ser-452).

Belongs to the iron-containing alcohol dehydrogenase family. Hydroxyacid-oxoacid transhydrogenase subfamily. Expressed in kidney and liver.

Its subcellular location is the mitochondrion. It carries out the reaction (S)-3-hydroxybutanoate + 2-oxoglutarate = (R)-2-hydroxyglutarate + acetoacetate. The catalysed reaction is 4-hydroxybutanoate + 2-oxoglutarate = (R)-2-hydroxyglutarate + succinate semialdehyde. Functionally, catalyzes the cofactor-independent reversible oxidation of gamma-hydroxybutyrate (GHB) to succinic semialdehyde (SSA) coupled to reduction of 2-ketoglutarate (2-KG) to D-2-hydroxyglutarate (D-2-HG). L-3-hydroxybutyrate (L-3-OHB) is also a substrate for HOT when using 2-KG as hydrogen acceptor, resulting in the formation of D-2-HG. The chain is Hydroxyacid-oxoacid transhydrogenase, mitochondrial (Adhfe1) from Rattus norvegicus (Rat).